The primary structure comprises 143 residues: Chorion class A protein Ld5 (143 aa).

The N-terminal stretch at 1-21 is a signal peptide; the sequence is MNSFALLLVCIQACLVQSVFS.

Belongs to the chorion protein family.

Functionally, this protein is one of many from the eggshell of the gypsy moth. This chain is Chorion class A protein Ld5, found in Lymantria dispar (Gypsy moth).